The sequence spans 150 residues: UPF0178 protein PBPRA1738 (150 aa).

It belongs to the UPF0178 family.

This is UPF0178 protein PBPRA1738 from Photobacterium profundum (strain SS9).